We begin with the raw amino-acid sequence, 404 residues long: Cytochrome b (404 aa).

4 helical membrane passes run 35–55 (FGSLAGLCLVIQILTGVFLAM), 79–101 (WLLRYMHANGASMFFIVVYLHFF), 116–136 (VWCLGVVILLLMIVTAFIGYV), and 182–202 (FFSLHYLLPFIIAGASILHLA). Residues histidine 85 and histidine 99 each coordinate heme b. Residues histidine 186 and histidine 200 each contribute to the heme b site. Histidine 205 is an a ubiquinone binding site. 4 helical membrane passes run 228–248 (IYVKDLVGWVAFAIFFSIFVF), 292–312 (LGGVAAIGLVFVSLLALPFIN), 324–344 (IHQKFFWLLVADCLLLGWIGC), and 351–370 (YVTIGQIASVGFFFYFAITP).

Belongs to the cytochrome b family. The main subunits of complex b-c1 are: cytochrome b, cytochrome c1 and the Rieske protein. It depends on heme b as a cofactor.

The protein resides in the mitochondrion inner membrane. Functionally, component of the ubiquinol-cytochrome c reductase complex (complex III or cytochrome b-c1 complex) that is part of the mitochondrial respiratory chain. The b-c1 complex mediates electron transfer from ubiquinol to cytochrome c. Contributes to the generation of a proton gradient across the mitochondrial membrane that is then used for ATP synthesis. This Marchantia polymorpha (Common liverwort) protein is Cytochrome b (MT-CYB).